The sequence spans 157 residues: NADPH-dependent 7-cyano-7-deazaguanine reductase (157 aa).

The active-site Thioimide intermediate is Cys-55. The active-site Proton donor is Asp-62. Substrate is bound by residues 77–79 and 96–97; these read VES and HE.

It belongs to the GTP cyclohydrolase I family. QueF type 1 subfamily.

It is found in the cytoplasm. It catalyses the reaction 7-aminomethyl-7-carbaguanine + 2 NADP(+) = 7-cyano-7-deazaguanine + 2 NADPH + 3 H(+). It functions in the pathway tRNA modification; tRNA-queuosine biosynthesis. Its function is as follows. Catalyzes the NADPH-dependent reduction of 7-cyano-7-deazaguanine (preQ0) to 7-aminomethyl-7-deazaguanine (preQ1). This chain is NADPH-dependent 7-cyano-7-deazaguanine reductase, found in Neisseria gonorrhoeae (strain ATCC 700825 / FA 1090).